The sequence spans 216 residues: MKSAIMAVASAAPGLRGPSAFNGAALTTSAKSSSAMKMSFESEIGAQAPLGFWDPLGLLEDADQDAFERLRYVEVKLGRIAMLAIAGHLTQQNARLPGMLSNSANLSFADMPNGVAALSKIPPGGLAQIFGFIGFLELAVMKNVEGSFPGDFTLGGNPFASSWDAMSAETQASKRAIELNNGRAAQMGILALMVHEELNNKPYVINDLLGASYNFN.

A chloroplast-targeting transit peptide spans 1–38; it reads MKSAIMAVASAAPGLRGPSAFNGAALTTSAKSSSAMKM. The next 3 helical transmembrane spans lie at 80–100, 121–141, and 182–202; these read IAML…PGML, IPPG…LAVM, and GRAA…NNKP.

This sequence belongs to the fucoxanthin chlorophyll protein family. In terms of assembly, the LHC complex of chromophytic algae is composed of fucoxanthin, chlorophyll A and C bound non-covalently by fucoxanthin chlorophyll proteins (FCPs). The ratio of pigments in this LHC is; fucoxanthin: chlorophyll C: chlorophyll A; (0.6-1): (0.1-0.3): (1).

It localises to the plastid. The protein resides in the chloroplast thylakoid membrane. Functionally, the light-harvesting complex (LHC) functions as a light receptor, it captures and delivers excitation energy to photosystems with which it is closely associated. Energy is transferred from the carotenoid and chlorophyll C (or B) to chlorophyll A and the photosynthetic reaction centers where it is used to synthesize ATP and reducing power. This Macrocystis pyrifera (Giant kelp) protein is Fucoxanthin-chlorophyll a-c binding protein C, chloroplastic (FCPC).